The chain runs to 54 residues: Large ribosomal subunit protein bL32 (54 aa).

Residues 1-24 form a disordered region; the sequence is MAVQKSKPTRSKRGMRRSHDSLKE. Residues 7 to 16 show a composition bias toward basic residues; the sequence is KPTRSKRGMR.

The protein belongs to the bacterial ribosomal protein bL32 family.

The sequence is that of Large ribosomal subunit protein bL32 from Buchnera aphidicola subsp. Schizaphis graminum (strain Sg).